Consider the following 173-residue polypeptide: Translation initiation factor IF-3 (173 aa).

It belongs to the IF-3 family. Monomer.

The protein localises to the cytoplasm. Its function is as follows. IF-3 binds to the 30S ribosomal subunit and shifts the equilibrium between 70S ribosomes and their 50S and 30S subunits in favor of the free subunits, thus enhancing the availability of 30S subunits on which protein synthesis initiation begins. In Phenylobacterium zucineum (strain HLK1), this protein is Translation initiation factor IF-3.